Here is a 424-residue protein sequence, read N- to C-terminus: Neurotensin receptor type 1 (424 aa).

Residues 1–23 (MHLNSSVPQGTPGEPDAQPFSGP) are disordered. The Extracellular segment spans residues 1 to 68 (MHLNSSVPQG…TDIYSKVLVT (68 aa)). 3 N-linked (GlcNAc...) asparagine glycosylation sites follow: Asn-4, Asn-38, and Asn-42. The helical transmembrane segment at 69 to 89 (AIYLALFVVGTVGNSVTAFTL) threads the bilayer. The Cytoplasmic portion of the chain corresponds to 90–103 (ARKKSLQSLQSTVH). Residues 104-123 (YHLGSLALSDLLILLLAMPV) form a helical membrane-spanning segment. The Extracellular segment spans residues 124-143 (ELYNFIWVHHPWAFGDAGCR). A disulfide bridge links Cys-142 with Cys-225. A helical transmembrane segment spans residues 144 to 165 (GYYFLRDACTYATALNVASLSV). Over 166–185 (ERYLAICHPFKAKTLMSRSR) the chain is Cytoplasmic. A helical transmembrane segment spans residues 186 to 206 (TKKFISAIWLASALLAIPMLF). The Extracellular segment spans residues 207 to 235 (TMGLQNRSGDGTHPGGLVCTPIVDTATVK). A helical membrane pass occupies residues 236 to 260 (VVIQVNTFMSFLFPMLVISILNTVI). The Cytoplasmic portion of the chain corresponds to 261–308 (ANKLTVMVHQAAEQGRVCTVGTHNGLEHSTFNMTIEPGRVQALRHGVL). Residues 309 to 330 (VLRAVVIAFVVCWLPYHVRRLM) traverse the membrane as a helical segment. The interval 326–349 (VRRLMFCYISDEQWTTFLFDFYHY) is neurotensin binding. The Extracellular segment spans residues 331 to 348 (FCYISDEQWTTFLFDFYH). The chain crosses the membrane as a helical span at residues 349 to 369 (YFYMLTNALFYVSSAINPILY). Residues 370-424 (NLVSANFRQVFLSTLACLCPGWRHRRKKRPTFSRKPNSMSSNHAFSTSATRETLY) lie on the Cytoplasmic side of the membrane. Residues Cys-386 and Cys-388 are each lipidated (S-palmitoyl cysteine). The interval 397 to 424 (KRPTFSRKPNSMSSNHAFSTSATRETLY) is disordered. Residues 403 to 424 (RKPNSMSSNHAFSTSATRETLY) show a composition bias toward polar residues.

The protein belongs to the G-protein coupled receptor 1 family. Neurotensin receptor subfamily. NTSR1 sub-subfamily. Interacts (palmitoylated form) with GNA11. N-glycosylated. Post-translationally, palmitoylated; this is required for normal localization at membrane rafts and normal GNA11-mediated activation of down-stream signaling cascades. The palmitoylation level increases in response to neurotensin treatment. As to expression, detected in brain and small intestine.

Its subcellular location is the cell membrane. It is found in the membrane raft. Its function is as follows. G-protein coupled receptor for the tridecapeptide neurotensin (NTS). Signaling is effected via G proteins that activate a phosphatidylinositol-calcium second messenger system. Signaling leads to the activation of downstream MAP kinases and protects cells against apoptosis. This chain is Neurotensin receptor type 1 (Ntsr1), found in Rattus norvegicus (Rat).